Reading from the N-terminus, the 232-residue chain is Enterobactin synthase component D (232 aa).

The Mg(2+) site is built by Asp106, Glu108, and Glu150.

The protein belongs to the P-Pant transferase superfamily. EntD family. As to quaternary structure, entB, EntD, EntE, and EntF form a multienzyme complex called enterobactin synthase. Mg(2+) is required as a cofactor.

It is found in the membrane. The enzyme catalyses apo-[aryl-carrier protein] + CoA = holo-[aryl-carrier protein] + adenosine 3',5'-bisphosphate + H(+). It carries out the reaction apo-[peptidyl-carrier protein] + CoA = holo-[peptidyl-carrier protein] + adenosine 3',5'-bisphosphate + H(+). It participates in siderophore biosynthesis; enterobactin biosynthesis. Its function is as follows. Involved in the biosynthesis of the siderophore enterobactin (enterochelin), which is a macrocyclic trimeric lactone of N-(2,3-dihydroxybenzoyl)-serine. The serine trilactone serves as a scaffolding for the three catechol functionalities that provide hexadentate coordination for the tightly ligated iron(2+) atoms. Plays an essential role in the assembly of the enterobactin by catalyzing the transfer of the 4'-phosphopantetheine (Ppant) moiety from coenzyme A to the apo-domains of both EntB (ArCP domain) and EntF (PCP domain) to yield their holo-forms which make them competent for the activation of 2,3-dihydroxybenzoate (DHB) and L-serine, respectively. The protein is Enterobactin synthase component D of Salmonella austin.